The following is a 438-amino-acid chain: Argininosuccinate lyase (438 aa).

This sequence belongs to the lyase 1 family. Argininosuccinate lyase subfamily.

It is found in the cytoplasm. The enzyme catalyses 2-(N(omega)-L-arginino)succinate = fumarate + L-arginine. It functions in the pathway amino-acid biosynthesis; L-arginine biosynthesis; L-arginine from L-ornithine and carbamoyl phosphate: step 3/3. In Clostridioides difficile (strain 630) (Peptoclostridium difficile), this protein is Argininosuccinate lyase.